The primary structure comprises 784 residues: Ribosome biogenesis protein BOP1 homolog (784 aa).

Positions 1–11 (MTKKLALKRRG) are enriched in basic residues. The segment at 1–159 (MTKKLALKRR…DSDTSDEEDI (159 aa)) is disordered. Composition is skewed to acidic residues over residues 27–36 (SENEEEEEDL), 45–54 (EDSTDDEGID), 62–73 (SEELQFESDEEG), and 84–111 (AEED…EDEE). Composition is skewed to basic and acidic residues over residues 112-123 (KDSKSKQTDDKP) and 138-148 (LPKRDSSKPEY). Over residues 149 to 158 (QDSDTSDEED) the composition is skewed to acidic residues. WD repeat units follow at residues 445-486 (GHTD…RTIE), 488-526 (DEVV…KVLV), 570-612 (THFK…SQIP), 615-653 (KSKG…LVKK), 656-695 (TNSK…KPYQ), 699-738 (LHRN…DLLQ), and 754-784 (RDEF…RLYT).

The protein belongs to the WD repeat BOP1/ERB1 family.

The protein localises to the nucleus. It localises to the nucleolus. Its subcellular location is the nucleoplasm. Required for maturation of ribosomal RNAs and formation of the large ribosomal subunit. The protein is Ribosome biogenesis protein BOP1 homolog of Drosophila melanogaster (Fruit fly).